The chain runs to 151 residues: Neuroglobin (151 aa).

One can recognise a Globin domain in the interval 1–149 (MERPEPELIR…VVQAMSRGWD (149 aa)). Positions 64 and 96 each coordinate heme b.

Belongs to the globin family. Monomer. Homodimer and homotetramer; disulfide-linked. Mainly monomeric but also detected as part of homodimers and homotetramers. Interacts with 14-3-3 proteins; regulates the phosphorylation of NGB. Could interact (ferrous form) with G-alpha(i) proteins (GTP-bound form). Post-translationally, phosphorylated during hypoxia by ERK1/ERK2. Phosphorylation regulates the heme pocket hexacoordination preventing the association of His-64 with the heme metal center. Thereby, promotes the access of dioxygen and nitrite to the heme and stimulates the nitrite reductase activity. Phosphorylation during hypoxia is stabilized by 14-3-3 proteins.

The protein resides in the cytoplasm. Its subcellular location is the cytosol. It is found in the mitochondrion matrix. The catalysed reaction is Fe(III)-heme b-[protein] + nitric oxide + H2O = Fe(II)-heme b-[protein] + nitrite + 2 H(+). Monomeric globin with a bis-histidyl six-coordinate heme-iron atom through which it can bind dioxygen, carbon monoxide and nitric oxide. Could help transport oxygen and increase its availability to the metabolically active neuronal tissues, though its low quantity in tissues as well as its high affinity for dioxygen, which may limit its oxygen-releasing ability, argue against it. The ferrous/deoxygenated form exhibits a nitrite reductase activity and it could produce nitric oxide which in turn inhibits cellular respiration in response to hypoxia. In its ferrous/deoxygenated state, it may also exhibit GDI (Guanine nucleotide Dissociation Inhibitor) activity toward heterotrimeric G-alpha proteins, thereby regulating signal transduction to facilitate neuroprotective responses in the wake of hypoxia and associated oxidative stress. The protein is Neuroglobin of Macaca mulatta (Rhesus macaque).